Reading from the N-terminus, the 662-residue chain is UvrABC system protein B (662 aa).

One can recognise a Helicase ATP-binding domain in the interval 25 to 182; the sequence is KGIEKGEKFQ…KKLVEIQYER (158 aa). 38 to 45 provides a ligand contact to ATP; that stretch reads GVTGSGKT. The Beta-hairpin motif lies at 91–114; that stretch reads YYDYYQPEAYVAQSDTYIEKDASI. Residues 429–595 form the Helicase C-terminal domain; the sequence is QIDDLYTSIQ…TIIKDIREVI (167 aa). One can recognise a UVR domain in the interval 622-657; sequence DKLIEKYEEEMKEAAQNLQFEKAAHLRDVIYKLKRD.

It belongs to the UvrB family. As to quaternary structure, forms a heterotetramer with UvrA during the search for lesions. Interacts with UvrC in an incision complex.

The protein resides in the cytoplasm. Functionally, the UvrABC repair system catalyzes the recognition and processing of DNA lesions. A damage recognition complex composed of 2 UvrA and 2 UvrB subunits scans DNA for abnormalities. Upon binding of the UvrA(2)B(2) complex to a putative damaged site, the DNA wraps around one UvrB monomer. DNA wrap is dependent on ATP binding by UvrB and probably causes local melting of the DNA helix, facilitating insertion of UvrB beta-hairpin between the DNA strands. Then UvrB probes one DNA strand for the presence of a lesion. If a lesion is found the UvrA subunits dissociate and the UvrB-DNA preincision complex is formed. This complex is subsequently bound by UvrC and the second UvrB is released. If no lesion is found, the DNA wraps around the other UvrB subunit that will check the other stand for damage. This Clostridium botulinum (strain Loch Maree / Type A3) protein is UvrABC system protein B.